Consider the following 267-residue polypeptide: tRNA pseudouridine synthase A (267 aa).

The active-site Nucleophile is the Asp55. Tyr111 contacts substrate.

Belongs to the tRNA pseudouridine synthase TruA family.

It carries out the reaction uridine(38/39/40) in tRNA = pseudouridine(38/39/40) in tRNA. Its function is as follows. Formation of pseudouridine at positions 38, 39 and 40 in the anticodon stem and loop of transfer RNAs. This is tRNA pseudouridine synthase A from Thermococcus gammatolerans (strain DSM 15229 / JCM 11827 / EJ3).